Here is a 703-residue protein sequence, read N- to C-terminus: Elongation factor G 1 (703 aa).

Positions 8 to 290 constitute a tr-type G domain; sequence ERYRNIGISA…AVIDFLPSPV (283 aa). GTP contacts are provided by residues 17-24, 88-92, and 142-145; these read AHIDAGKT, DTPGH, and NKMD.

Belongs to the TRAFAC class translation factor GTPase superfamily. Classic translation factor GTPase family. EF-G/EF-2 subfamily.

The protein resides in the cytoplasm. Functionally, catalyzes the GTP-dependent ribosomal translocation step during translation elongation. During this step, the ribosome changes from the pre-translocational (PRE) to the post-translocational (POST) state as the newly formed A-site-bound peptidyl-tRNA and P-site-bound deacylated tRNA move to the P and E sites, respectively. Catalyzes the coordinated movement of the two tRNA molecules, the mRNA and conformational changes in the ribosome. This chain is Elongation factor G 1, found in Ralstonia nicotianae (strain ATCC BAA-1114 / GMI1000) (Ralstonia solanacearum).